The primary structure comprises 232 residues: MDMRRASMCMMLICVSLVLLSGFGQFVICSEEKGTYNDNVVKMKLGGFSDSKNDWNGGKEIDDIALFAVQEHNRRENAVLELARVLKATEQVVAGKLYRLTLEVIEAGEKKIYEAKVWVKPWMNFKQLQEFKNIIPSFTISDLGFKPDGNGFDWRSVSTNNPEVQEAAKHAMKSLQQKSNSLFPYKLIDIILARAKVVEERVKFELLLKLERGNKLEKFMVEVMKDQTGKYE.

The signal sequence occupies residues 1-29 (MDMRRASMCMMLICVSLVLLSGFGQFVIC). Cystatin domains are found at residues 46 to 135 (GGFS…KNII) and 152 to 214 (FDWR…ERGN). The short motif at 91–95 (QVVAG) is the Secondary area of contact element. Ser181 carries the post-translational modification Phosphoserine.

This sequence belongs to the cystatin family. Phytocystatin subfamily.

The protein localises to the secreted. Its function is as follows. Specific inhibitor of cysteine proteinases. Probably involved in the regulation of endogenous processes and in defense against pests and pathogens. The protein is Cysteine proteinase inhibitor 7 (CYS7) of Arabidopsis thaliana (Mouse-ear cress).